The primary structure comprises 420 residues: UPF0053 protein HI_0107 (420 aa).

In terms of domain architecture, CNNM transmembrane spans 2–190 (DSIPLSTLFI…GEATPNEQHP (189 aa)). 4 helical membrane-spanning segments follow: residues 3–23 (SIPL…SAYF), 65–85 (FILI…TVIG), 92–112 (AGVA…SEIF), and 126–146 (FFSS…VWLM). 2 consecutive CBS domains span residues 208-268 (MVPR…KNEF) and 273-333 (LIRA…FTTS).

The protein belongs to the UPF0053 family.

It localises to the cell membrane. The protein is UPF0053 protein HI_0107 of Haemophilus influenzae (strain ATCC 51907 / DSM 11121 / KW20 / Rd).